A 141-amino-acid chain; its full sequence is Nucleoside diphosphate kinase (141 aa).

ATP is bound by residues K11, F59, R87, T93, R104, and N114. H117 functions as the Pros-phosphohistidine intermediate in the catalytic mechanism.

It belongs to the NDK family. In terms of assembly, homotetramer. Requires Mg(2+) as cofactor.

It is found in the cytoplasm. The catalysed reaction is a 2'-deoxyribonucleoside 5'-diphosphate + ATP = a 2'-deoxyribonucleoside 5'-triphosphate + ADP. It carries out the reaction a ribonucleoside 5'-diphosphate + ATP = a ribonucleoside 5'-triphosphate + ADP. Major role in the synthesis of nucleoside triphosphates other than ATP. The ATP gamma phosphate is transferred to the NDP beta phosphate via a ping-pong mechanism, using a phosphorylated active-site intermediate. In Legionella pneumophila (strain Paris), this protein is Nucleoside diphosphate kinase.